Reading from the N-terminus, the 659-residue chain is mRNA export factor ICP27 homolog (659 aa).

4 residues coordinate Zn(2+): C130, H266, C268, and C273. The segment at 130 to 273 (CMMSNGERPP…CEHACNDNAC (144 aa)) adopts a CHC2-type zinc-finger fold. The interval 317–659 (GSFDDSRSAT…GEDGESDMTL (343 aa)) is disordered. A compositionally biased stretch (low complexity) spans 324 to 336 (SATSGDGSSCSSA). Positions 354–365 (SDQTDTSNNGTV) are enriched in polar residues. The span at 387–397 (SPLDRPNDYHY) shows a compositional bias: basic and acidic residues. Positions 413–427 (GSGSSSTEAVSTASA) are enriched in low complexity. Residues 483-499 (SPERRSSEERSSSDQRR) show a composition bias toward basic and acidic residues. A compositionally biased stretch (polar residues) spans 503–513 (LSRSASATSGG). Residues 553–575 (SRSNTPPSSPSKPDSAPAASASP) show a composition bias toward low complexity. Residues 598-610 (ESVRVSERFETGD) are compositionally biased toward basic and acidic residues. 2 stretches are compositionally biased toward acidic residues: residues 617 to 628 (ETEDESDDEDDQ) and 646 to 659 (SETDGEDGESDMTL).

The protein belongs to the HHV-1 ICP27 protein family.

It is found in the virion tegument. The protein localises to the virion. It localises to the host nucleus. The protein resides in the host cytoplasm. Its function is as follows. Immediate early (EI) protein that plays many roles during productive infection including regulation of viral gene expression and nuclear export of intronless viral RNAs. The polypeptide is mRNA export factor ICP27 homolog (Elephantid herpesvirus 1 (isolate Asian elephant/Berlin/Kiba/1998) (EIHV-1)).